The primary structure comprises 515 residues: Histidine ammonia-lyase (515 aa).

Residues 145-147 (ASG) constitute a cross-link (5-imidazolinone (Ala-Gly)). At S146 the chain carries 2,3-didehydroalanine (Ser).

This sequence belongs to the PAL/histidase family. In terms of processing, contains an active site 4-methylidene-imidazol-5-one (MIO), which is formed autocatalytically by cyclization and dehydration of residues Ala-Ser-Gly.

The protein resides in the cytoplasm. The enzyme catalyses L-histidine = trans-urocanate + NH4(+). It participates in amino-acid degradation; L-histidine degradation into L-glutamate; N-formimidoyl-L-glutamate from L-histidine: step 1/3. The sequence is that of Histidine ammonia-lyase from Gluconacetobacter diazotrophicus (strain ATCC 49037 / DSM 5601 / CCUG 37298 / CIP 103539 / LMG 7603 / PAl5).